The primary structure comprises 93 residues: Large ribosomal subunit protein uL23 (93 aa).

Belongs to the universal ribosomal protein uL23 family. Part of the 50S ribosomal subunit. Contacts protein L29, and trigger factor when it is bound to the ribosome.

One of the early assembly proteins it binds 23S rRNA. One of the proteins that surrounds the polypeptide exit tunnel on the outside of the ribosome. Forms the main docking site for trigger factor binding to the ribosome. This is Large ribosomal subunit protein uL23 from Helicobacter acinonychis (strain Sheeba).